The sequence spans 241 residues: Demethylmenaquinone methyltransferase (241 aa).

S-adenosyl-L-methionine contacts are provided by residues Thr60, Asp81, and 106–107; that span reads DA.

The protein belongs to the class I-like SAM-binding methyltransferase superfamily. MenG/UbiE family.

The catalysed reaction is a 2-demethylmenaquinol + S-adenosyl-L-methionine = a menaquinol + S-adenosyl-L-homocysteine + H(+). It participates in quinol/quinone metabolism; menaquinone biosynthesis; menaquinol from 1,4-dihydroxy-2-naphthoate: step 2/2. Its function is as follows. Methyltransferase required for the conversion of demethylmenaquinol (DMKH2) to menaquinol (MKH2). In Staphylococcus aureus (strain MRSA252), this protein is Demethylmenaquinone methyltransferase.